The sequence spans 534 residues: CTP synthase (534 aa).

An amidoligase domain region spans residues 1–268; that stretch reads MSVKYIFVTG…AKIVCKRLGL (268 aa). Serine 14 is a CTP binding site. Serine 14 provides a ligand contact to UTP. 15–20 contributes to the ATP binding site; sequence GLGKGI. L-glutamine is bound at residue tyrosine 55. Aspartate 72 provides a ligand contact to ATP. Aspartate 72 and glutamate 142 together coordinate Mg(2+). CTP contacts are provided by residues 149–151, 189–194, and lysine 225; these read DIE and KTKPTQ. Residues 189–194 and lysine 225 contribute to the UTP site; that span reads KTKPTQ. One can recognise a Glutamine amidotransferase type-1 domain in the interval 293–534; the sequence is TIGLVGKYVE…VRAAYEYKTK (242 aa). Glycine 355 lines the L-glutamine pocket. The active-site Nucleophile; for glutamine hydrolysis is cysteine 382. Residues 383-386, glutamate 406, and arginine 462 each bind L-glutamine; that span reads LGMQ. Active-site residues include histidine 507 and glutamate 509.

It belongs to the CTP synthase family. In terms of assembly, homotetramer.

The catalysed reaction is UTP + L-glutamine + ATP + H2O = CTP + L-glutamate + ADP + phosphate + 2 H(+). It catalyses the reaction L-glutamine + H2O = L-glutamate + NH4(+). It carries out the reaction UTP + NH4(+) + ATP = CTP + ADP + phosphate + 2 H(+). Its pathway is pyrimidine metabolism; CTP biosynthesis via de novo pathway; CTP from UDP: step 2/2. With respect to regulation, allosterically activated by GTP, when glutamine is the substrate; GTP has no effect on the reaction when ammonia is the substrate. The allosteric effector GTP functions by stabilizing the protein conformation that binds the tetrahedral intermediate(s) formed during glutamine hydrolysis. Inhibited by the product CTP, via allosteric rather than competitive inhibition. In terms of biological role, catalyzes the ATP-dependent amination of UTP to CTP with either L-glutamine or ammonia as the source of nitrogen. Regulates intracellular CTP levels through interactions with the four ribonucleotide triphosphates. The chain is CTP synthase from Ruminiclostridium cellulolyticum (strain ATCC 35319 / DSM 5812 / JCM 6584 / H10) (Clostridium cellulolyticum).